The sequence spans 217 residues: 2-phospho-L-lactate guanylyltransferase (217 aa).

Belongs to the CofC family. In terms of assembly, homodimer.

It carries out the reaction (2S)-2-phospholactate + GTP + H(+) = (2S)-lactyl-2-diphospho-5'-guanosine + diphosphate. The protein operates within cofactor biosynthesis; coenzyme F420 biosynthesis. In terms of biological role, guanylyltransferase that catalyzes the activation of (2S)-2-phospholactate (2-PL) as (2S)-lactyl-2-diphospho-5'-guanosine, via the condensation of 2-PL with GTP. It is involved in the biosynthesis of coenzyme F420, a hydride carrier cofactor. The polypeptide is 2-phospho-L-lactate guanylyltransferase (Methanospirillum hungatei JF-1 (strain ATCC 27890 / DSM 864 / NBRC 100397 / JF-1)).